Reading from the N-terminus, the 104-residue chain is Integration host factor subunit beta (104 aa).

The protein belongs to the bacterial histone-like protein family. As to quaternary structure, heterodimer of an alpha and a beta chain.

Functionally, this protein is one of the two subunits of integration host factor, a specific DNA-binding protein that functions in genetic recombination as well as in transcriptional and translational control. The chain is Integration host factor subunit beta (ihfB) from Xylella fastidiosa (strain 9a5c).